Consider the following 235-residue polypeptide: Probable transcriptional regulatory protein MPN_478 (235 aa).

This sequence belongs to the TACO1 family.

The protein localises to the cytoplasm. The polypeptide is Probable transcriptional regulatory protein MPN_478 (Mycoplasma pneumoniae (strain ATCC 29342 / M129 / Subtype 1) (Mycoplasmoides pneumoniae)).